The following is a 511-amino-acid chain: 60 kDa neurofilament protein (511 aa).

The tract at residues 1–32 is disordered; it reads MSVTQKKTEISTTTTYEGESRPSSGMSGFSYS. Positions 1–99 are head; it reads MSVTQKKTEI…KANREREKQD (99 aa). The segment covering 21 to 30 has biased composition (polar residues); that stretch reads RPSSGMSGFS. One can recognise an IF rod domain in the interval 96-449; the sequence is EKQDMRDLNE…KLLEGEESRV (354 aa). A coil 1A region spans residues 100–135; that stretch reads MRDLNERFANYIEKVRFLEAQNKKLAGELEELKSKW. The linker 1 stretch occupies residues 136–145; that stretch reads GKETSAIKEM. The tract at residues 146-284 is coil 1B; the sequence is YETELEEARK…VHAQELKELA (139 aa). Residues 285–303 are linker 12; sequence ALAYRDTTAENREFWRNEL. Residues 304-449 form a coil 2 region; it reads AQAIRDIQQE…KLLEGEESRV (146 aa). A tail region spans residues 450–511; it reads GMKQIVEQVV…EEKKSMGSSD (62 aa). The disordered stretch occupies residues 479–511; it reads GYEATGGITTTTTTSSQERRSMSEEKKSMGSSD. Over residues 483-492 the composition is skewed to low complexity; that stretch reads TGGITTTTTT. The span at 495-511 shows a compositional bias: basic and acidic residues; that stretch reads QERRSMSEEKKSMGSSD.

This sequence belongs to the intermediate filament family.

Functionally, major squid neurofilament protein. The protein is 60 kDa neurofilament protein of Doryteuthis pealeii (Longfin inshore squid).